The following is a 708-amino-acid chain: Glycogen [starch] synthase isoform 1 (708 aa).

R20 contacts UDP. A Phosphoserine modification is found at S159. Residues H193 and R199 each coordinate UDP-alpha-D-glucose. Residues H280, E281, Q283, H286, and K290 each contribute to the alpha-D-glucose 6-phosphate site. Position 320 (R320) interacts with UDP. R320 lines the UDP-alpha-D-glucose pocket. S363 is modified (phosphoserine). H500 is a binding site for alpha-D-glucose 6-phosphate. E509, W511, and G512 together coordinate UDP-alpha-D-glucose. T514 is a UDP binding site. Residue S560 is modified to Phosphoserine. Positions 583 and 587 each coordinate alpha-D-glucose 6-phosphate. Phosphoserine occurs at positions 651 and 655. Phosphoserine; by PKA occurs at positions 660 and 662. A disordered region spans residues 687-708; sequence STNGAIDNDDDDNDTSAYYEDN. Positions 693–708 are enriched in acidic residues; sequence DNDDDDNDTSAYYEDN.

It belongs to the glycosyltransferase 3 family.

It carries out the reaction [(1-&gt;4)-alpha-D-glucosyl](n) + UDP-alpha-D-glucose = [(1-&gt;4)-alpha-D-glucosyl](n+1) + UDP + H(+). The protein operates within glycan biosynthesis; glycogen biosynthesis. With respect to regulation, allosteric activation by glucose-6-phosphate, and phosphorylation by a cAMP-dependent kinase. In terms of biological role, glycogen synthase participates in the glycogen biosynthetic process along with glycogenin and glycogen branching enzyme. Extends the primer composed of a few glucose units formed by glycogenin by adding new glucose units to it. In this context, glycogen synthase transfers the glycosyl residue from UDP-Glc to the non-reducing end of alpha-1,4-glucan. This is Glycogen [starch] synthase isoform 1 (GSY1) from Saccharomyces cerevisiae (strain ATCC 204508 / S288c) (Baker's yeast).